We begin with the raw amino-acid sequence, 542 residues long: MAKQIVYSEASRQAILRGVNQLADAVKVTLGPKGRNVVLEKKFGGPTITKDGVTVAKEIELKDPLENMGAQMVREVASKTSDVAGDGTTTATILAQSIYREGVKAVAAGANPMALKRGIDKAVELATEEVKKLSKPVSGDMIAQVGTISANSDKTIGNIIADAMKKVGKDGVITVEESKTMVTELDTVEGMQFDRGYLSPYFVSDAERMEAVLEDPYILIHEKKISNMKDLLPLLEQIARSGKPLLIIAEEVEGEALATLVVNKLRGTLNACAVKAPGFGDRRKAMLEDIGILTGGKPIMEDIGVKLEGVRLEDLGRAKRVTVDKDNTTIVDGAGNPKGIEGRIKQLRAQIDETTSDYDREKLQERLAKLAGGVAVIKVGAATETEMKEKKARVEDALHATRAAVEEGIVPGGGVALLRAAKALATFKVDGDEQIGVSIVKRACEEPLRQIVSNSGTEGAIVVDKVRENANNNYGYNAATDTYEDLVAAGVIDPTKVTRSALQHAASIAGLMLTTEAMIAEIPEKKSAPAGGPGGHGPEMDY.

ATP contacts are provided by residues 29–32 (TLGP), lysine 50, 86–90 (DGTTT), glycine 413, 477–479 (NAA), and aspartate 493.

The protein belongs to the chaperonin (HSP60) family. In terms of assembly, forms a cylinder of 14 subunits composed of two heptameric rings stacked back-to-back. Interacts with the co-chaperonin GroES.

Its subcellular location is the cytoplasm. The enzyme catalyses ATP + H2O + a folded polypeptide = ADP + phosphate + an unfolded polypeptide.. Functionally, together with its co-chaperonin GroES, plays an essential role in assisting protein folding. The GroEL-GroES system forms a nano-cage that allows encapsulation of the non-native substrate proteins and provides a physical environment optimized to promote and accelerate protein folding. The protein is Chaperonin GroEL of Solibacter usitatus (strain Ellin6076).